We begin with the raw amino-acid sequence, 270 residues long: uncharacterized protein (270 aa).

The tract at residues 166–186 (RRKENNISNESVSEEPESPLF) is disordered.

This is an uncharacterized protein from Ostreid herpesvirus 1 (isolate France) (OsHV-1).